We begin with the raw amino-acid sequence, 87 residues long: Phosphoribosyl-ATP pyrophosphatase (87 aa).

This sequence belongs to the PRA-PH family.

It is found in the cytoplasm. It carries out the reaction 1-(5-phospho-beta-D-ribosyl)-ATP + H2O = 1-(5-phospho-beta-D-ribosyl)-5'-AMP + diphosphate + H(+). It functions in the pathway amino-acid biosynthesis; L-histidine biosynthesis; L-histidine from 5-phospho-alpha-D-ribose 1-diphosphate: step 2/9. This chain is Phosphoribosyl-ATP pyrophosphatase, found in Clavibacter sepedonicus (Clavibacter michiganensis subsp. sepedonicus).